Reading from the N-terminus, the 178-residue chain is Large ribosomal subunit protein uL6 (178 aa).

The protein belongs to the universal ribosomal protein uL6 family. In terms of assembly, part of the 50S ribosomal subunit.

This protein binds to the 23S rRNA, and is important in its secondary structure. It is located near the subunit interface in the base of the L7/L12 stalk, and near the tRNA binding site of the peptidyltransferase center. In Levilactobacillus brevis (strain ATCC 367 / BCRC 12310 / CIP 105137 / JCM 1170 / LMG 11437 / NCIMB 947 / NCTC 947) (Lactobacillus brevis), this protein is Large ribosomal subunit protein uL6.